A 236-amino-acid chain; its full sequence is MKFGVIVFPGSNCDQDVHYALGSVLGQNVDYLWHGDTSVSGYDCLILPGGFSYGDYLRAGAIARFAPIMPAVIDFARSGGLVLGICNGFQILLEAGLLPGAMMRNACLQFRCQWTCLKVDNNATPFTNRFREGQVVRIPIAHGEGNYYADAATLAQLEANRQIIFRYCSPDGEVTPAANPNGSVGNIAGIINREGNVLGMMPHPERCAEGILGGSDGRELLASIVDWWERGERLGA.

Positions 3 to 234 constitute a Glutamine amidotransferase type-1 domain; the sequence is FGVIVFPGSN…VDWWERGERL (232 aa). The Nucleophile role is filled by cysteine 86. Catalysis depends on residues histidine 203 and glutamate 205.

In terms of assembly, part of the FGAM synthase complex composed of 1 PurL, 1 PurQ and 2 PurS subunits.

It localises to the cytoplasm. The enzyme catalyses N(2)-formyl-N(1)-(5-phospho-beta-D-ribosyl)glycinamide + L-glutamine + ATP + H2O = 2-formamido-N(1)-(5-O-phospho-beta-D-ribosyl)acetamidine + L-glutamate + ADP + phosphate + H(+). The catalysed reaction is L-glutamine + H2O = L-glutamate + NH4(+). Its pathway is purine metabolism; IMP biosynthesis via de novo pathway; 5-amino-1-(5-phospho-D-ribosyl)imidazole from N(2)-formyl-N(1)-(5-phospho-D-ribosyl)glycinamide: step 1/2. Part of the phosphoribosylformylglycinamidine synthase complex involved in the purines biosynthetic pathway. Catalyzes the ATP-dependent conversion of formylglycinamide ribonucleotide (FGAR) and glutamine to yield formylglycinamidine ribonucleotide (FGAM) and glutamate. The FGAM synthase complex is composed of three subunits. PurQ produces an ammonia molecule by converting glutamine to glutamate. PurL transfers the ammonia molecule to FGAR to form FGAM in an ATP-dependent manner. PurS interacts with PurQ and PurL and is thought to assist in the transfer of the ammonia molecule from PurQ to PurL. In Moorella thermoacetica (strain ATCC 39073 / JCM 9320), this protein is Phosphoribosylformylglycinamidine synthase subunit PurQ.